A 571-amino-acid polypeptide reads, in one-letter code: MTRISRSAYAEIYGPTVVGGVGDRVRLADTLLLAEVEKDHTIFGEEVKFGGGKVIRDGMGQSQRLATDCVDTVITNALIIDAVTGIVKADIGIKDGLISGIGKAGNPDTQPGVTIIIGASTEVVAGEGLIVTAGAIDTHIHFICPQQIEEALATGTTTMIGGGTGPATGSLATTSTSGPWHMAAMLQALDAFPVNVGLFGKGSSSSHGALLEQVRAGAMGLKIHEDWASTPASIDTCLNVAEETDIQVAIHSDTLNESGFVEDTFAAFKGRTIHSFHTEGAGGGHAPDIIRAAGMPNVLPASTNPTMPFTRNTIDEHLDMVMVCHHLDPSIAEDLAFAESRIRRETIAAEDILHDLGAFSIMSSDSQAMGRVGEIVLRTWQTAHKMKLQRGPLQGDSERSDNERIKRYIAKYTINPAVAHGIAHLVGSVEVGKLADLVLWKPAFFGVKVNMVLKSGMAVSASIGDMGASISTPQPVQIRPMWGSHGKALRTSVAFVSQVSLSNPAVSELELNKRLEAVRGCRGVTKHDMVRNNWLPAISVDPQTYQVYADGQLLRCEALAELPMAQRYFLF.

The Urease domain occupies 134-571 (GAIDTHIHFI…LPMAQRYFLF (438 aa)). His-139, His-141, and Lys-222 together coordinate Ni(2+). The residue at position 222 (Lys-222) is an N6-carboxylysine. Residue His-224 coordinates substrate. 2 residues coordinate Ni(2+): His-251 and His-277. His-325 serves as the catalytic Proton donor. Asp-365 serves as a coordination point for Ni(2+).

It belongs to the metallo-dependent hydrolases superfamily. Urease alpha subunit family. In terms of assembly, heterotrimer of UreA (gamma), UreB (beta) and UreC (alpha) subunits. Three heterotrimers associate to form the active enzyme. Ni cation serves as cofactor. In terms of processing, carboxylation allows a single lysine to coordinate two nickel ions.

It is found in the cytoplasm. It carries out the reaction urea + 2 H2O + H(+) = hydrogencarbonate + 2 NH4(+). It functions in the pathway nitrogen metabolism; urea degradation; CO(2) and NH(3) from urea (urease route): step 1/1. The sequence is that of Urease subunit alpha from Bordetella parapertussis (strain 12822 / ATCC BAA-587 / NCTC 13253).